The primary structure comprises 83 residues: MPLAVDLLHPEPQREIRCHKLKRLVQHPNSYFMDVKCSGCFKISTVFSHATTVVVCVGCNTVLCQPTRGKAKLTEGCSFRKKQ.

A C4-type zinc finger spans residues 37 to 59 (CSGCFKISTVFSHATTVVVCVGC).

This sequence belongs to the eukaryotic ribosomal protein eS27 family. Zn(2+) serves as cofactor.

The chain is Small ribosomal subunit protein eS27 (rps-27) from Caenorhabditis elegans.